Reading from the N-terminus, the 223-residue chain is N-acetylmuramic acid 6-phosphate phosphatase (223 aa).

Residue D9 is the Nucleophile of the active site. Mg(2+) is bound by residues D9, D11, and D168. D11 serves as the catalytic Proton donor.

The protein belongs to the HAD-like hydrolase superfamily. CbbY/CbbZ/Gph/YieH family. Phosphatase MupP subfamily. Mg(2+) is required as a cofactor.

The catalysed reaction is N-acetyl-D-muramate 6-phosphate + H2O = N-acetyl-D-muramate + phosphate. It functions in the pathway cell wall biogenesis; peptidoglycan recycling. Its function is as follows. Specifically catalyzes the dephosphorylation of N-acetylmuramate 6-phosphate (MurNAc-6P) to MurNac. Is involved in peptidoglycan recycling as part of a cell wall recycling pathway that bypasses de novo biosynthesis of the peptidoglycan precursor UDP-MurNAc. Plays a role in intrinsic resistance to fosfomycin, which targets the de novo synthesis of UDP-MurNAc. Shows a very low activity on GlcNAc-6P, and neither alpha-1-phosphorylated MurNAc, GlcNAc, or glucose nor glucosamine-6P or glucose-6P can be used as a substrate. This is N-acetylmuramic acid 6-phosphate phosphatase from Pseudomonas putida (strain ATCC 47054 / DSM 6125 / CFBP 8728 / NCIMB 11950 / KT2440).